Reading from the N-terminus, the 290-residue chain is Eukaryotic translation initiation factor 3 subunit G (290 aa).

Disordered stretches follow at residues 1–35 (MSRL…DGTK) and 157–200 (ESTG…GERM). The 79-residue stretch at 210–288 (ATLRVTNVSE…LILRVEFAKR (79 aa)) folds into the RRM domain.

It belongs to the eIF-3 subunit G family. Component of the eukaryotic translation initiation factor 3 (eIF-3) complex.

It is found in the cytoplasm. Its function is as follows. RNA-binding component of the eukaryotic translation initiation factor 3 (eIF-3) complex, which is involved in protein synthesis of a specialized repertoire of mRNAs and, together with other initiation factors, stimulates binding of mRNA and methionyl-tRNAi to the 40S ribosome. The eIF-3 complex specifically targets and initiates translation of a subset of mRNAs involved in cell proliferation. This subunit can bind 18S rRNA. The sequence is that of Eukaryotic translation initiation factor 3 subunit G (tif35) from Aspergillus clavatus (strain ATCC 1007 / CBS 513.65 / DSM 816 / NCTC 3887 / NRRL 1 / QM 1276 / 107).